We begin with the raw amino-acid sequence, 266 residues long: Stomatin homolog PH1511 (266 aa).

The chain crosses the membrane as a helical span at residues 7–27 (FFVTSIILLFILIFLASAIKI). Coiled coils occupy residues 125-152 (GQAH…EATD) and 178-213 (RQAE…ISEH).

The protein belongs to the band 7/mec-2 family. In terms of assembly, homotrimer. Interacts with PH1510 and is cleaved by PH1510.

It is found in the membrane. The polypeptide is Stomatin homolog PH1511 (Pyrococcus horikoshii (strain ATCC 700860 / DSM 12428 / JCM 9974 / NBRC 100139 / OT-3)).